Consider the following 249-residue polypeptide: Short-chain dehydrogenase virB (249 aa).

The NADP(+) site is built by isoleucine 16, arginine 104, tyrosine 150, lysine 154, valine 183, and threonine 185. The active-site Proton donor is the tyrosine 150. The active-site Lowers pKa of active site Tyr is lysine 154.

It belongs to the short-chain dehydrogenases/reductases (SDR) family.

Its pathway is secondary metabolite biosynthesis. Its function is as follows. Short-chain dehydrogenase; part of the gene cluster that mediates the biosynthesis of virensols and trichoxide, fungal natural products that contain or are derived from a salicylaldehyde core. The pathway begins with the synthesis of the reduced chain in virensol C by the highly reducing polyketide synthase virA via condensation of one acetate and 8 malonate units. VirA has interesting programming rules since the first 2 ketides are fully reduced, the 3 following ketides undergo beta-dehydration, and the last 3 ketides are only reduced to beta-hydroxys to yield the trihydroxy portion. The production of aldehyde virensol C by virA alone is surprising, since virA does not contain a reductase (R) domain that is typically associated with reductive product release in HRPKS. The cupin-domain enzyme virC is involved in enhancing virA product turnover. The short-chain dehydrogenase virB then oxidizes the C-7 alcohol of virensol C to a ketone, yielding virensol D. Virensol D is further transformed to salicylaldehyde 5-deoxyaurocitrin by the short-chain dehydrogenase virD. VirD catalyzes the dehydrogenation of C-3 to form the beta-ketone aldehyde, which is followed by the generation of the nucleophilic C-2 that is required for the intramolecular aldol condensation between C-2 and C-7, itself followed by dehydration and aromatization which leads to salicylaldehyde 5-deoxyaurocitrin. While the dehydrogenation of virensol D is definitely catalyzed by virD, the aldol condensation and dehydration may be uncatalyzed or assisted by virD. The short chain dehydrogenase virG then converts salicylaldehyde 5-deoxyaurocitrin into virensol B which is further hydroxylated by the cytochrome P450 monooxygenase virE to yield the hydroquinone virensol A. VirI then may oxidize virensol A to form the quinone, while virH performs the epoxidation. Finally, the two remaining short-chain dehydrogenases, virK and virL, are probably responsible for reducing the ketones to the corresponding alcohols to furnish the epoxycyclohexanol structure in trichoxide. This is Short-chain dehydrogenase virB from Hypocrea virens (strain Gv29-8 / FGSC 10586) (Gliocladium virens).